The chain runs to 123 residues: ATP synthase epsilon chain (123 aa).

Belongs to the ATPase epsilon chain family. In terms of assembly, F-type ATPases have 2 components, CF(1) - the catalytic core - and CF(0) - the membrane proton channel. CF(1) has five subunits: alpha(3), beta(3), gamma(1), delta(1), epsilon(1). CF(0) has three main subunits: a, b and c.

It localises to the cell inner membrane. Produces ATP from ADP in the presence of a proton gradient across the membrane. This Helicobacter pylori (strain HPAG1) protein is ATP synthase epsilon chain.